The following is a 215-amino-acid chain: MGKVYDWFEERLEIQSIADDISSKYVPPHVNIFYCIGGITFTCFLVQVATGFAMTFYYRPTVAEAFASVQYIMTEVNFGWLIRSIHRWSASMMVLMMILHVCRVYLTGGFKKPRELTWVTGVIMAVCTVSFGVTGYSLPWDQIGYWAVKIVTGVPDAIPVVGPALVELLRGGVGVGQSTLTRFYSLHTFVLPLATAVFMLMHFLMIRKQGISGPL.

Residues 32–52 traverse the membrane as a helical segment; that stretch reads IFYCIGGITFTCFLVQVATGF. Position 35 (cysteine 35) interacts with heme c. Residues histidine 86 and histidine 100 each contribute to the heme b site. 3 helical membrane-spanning segments follow: residues 90–110, 116–136, and 186–206; these read ASMMVLMMILHVCRVYLTGGF, LTWVTGVIMAVCTVSFGVTGY, and LHTFVLPLATAVFMLMHFLMI. Positions 187 and 202 each coordinate heme b.

This sequence belongs to the cytochrome b family. PetB subfamily. In terms of assembly, the 4 large subunits of the cytochrome b6-f complex are cytochrome b6, subunit IV (17 kDa polypeptide, PetD), cytochrome f and the Rieske protein, while the 4 small subunits are PetG, PetL, PetM and PetN. The complex functions as a dimer. Heme b serves as cofactor. It depends on heme c as a cofactor.

It is found in the plastid. The protein localises to the chloroplast thylakoid membrane. Functionally, component of the cytochrome b6-f complex, which mediates electron transfer between photosystem II (PSII) and photosystem I (PSI), cyclic electron flow around PSI, and state transitions. The polypeptide is Cytochrome b6 (Chlorella vulgaris (Green alga)).